The primary structure comprises 312 residues: MAGTAQGVQTQDVIKISATSGLTPAPQARDHKVEIAKLIDVSTCIGCKACQVGCSEWNDIRSDINAQCVGVYDNPVDLDAKAWTVMRFNEVEENDRLEWLIRKDGCMHCTEPGCLKACPAPGAIIQYANGIVDFQSDKCIGCGYCIAGCPFNIPRMNPEDNRVYKCTLCVDRVSVGQEPACVKTCPTGAIRFGSKEEMKIYAEQRVADLKSRGYENAGLYDPPGVGGTHVMYVLHHADKPELYNGLPKDPQIDLSVTLWKDVLKPVAAVAMGGLALAEVAHYLTVGPNVEEDVEDHHHEFEENKPSKGENNE.

4 consecutive 4Fe-4S ferredoxin-type domains span residues I35–N65, L97–N129, G130–E159, and Y164–K195. 16 residues coordinate [4Fe-4S] cluster: C44, C47, C50, C54, C106, C109, C114, C118, C139, C142, C145, C149, C166, C169, C181, and C185.

As to quaternary structure, formate dehydrogenase is a membrane-bound complex, formed by subunits alpha, beta and gamma. [4Fe-4S] cluster is required as a cofactor.

It localises to the cell membrane. Allows to use formate as major electron donor during aerobic respiration. The beta chain is an electron transfer unit containing 4 cysteine clusters involved in the formation of iron-sulfur centers. Electrons are transferred from the gamma chain to the molybdenum cofactor of the alpha subunit. The sequence is that of Formate dehydrogenase iron-sulfur subunit (fdxH) from Haemophilus influenzae (strain ATCC 51907 / DSM 11121 / KW20 / Rd).